The sequence spans 199 residues: Glycerol-3-phosphate acyltransferase (199 aa).

The next 4 membrane-spanning stretches (helical) occupy residues 2 to 22 (LEVLLVLLGYVLGSVPTGILV), 77 to 97 (PWVLAAVALAAVVGHCWPVFL), 113 to 133 (IALAPPVGLGMFALWWVVALA), and 139 to 159 (LAAMVVTVVSPFAFLLSGQPL).

This sequence belongs to the PlsY family. As to quaternary structure, probably interacts with PlsX.

The protein resides in the cell membrane. It carries out the reaction an acyl phosphate + sn-glycerol 3-phosphate = a 1-acyl-sn-glycero-3-phosphate + phosphate. It functions in the pathway lipid metabolism; phospholipid metabolism. In terms of biological role, catalyzes the transfer of an acyl group from acyl-phosphate (acyl-PO(4)) to glycerol-3-phosphate (G3P) to form lysophosphatidic acid (LPA). This enzyme utilizes acyl-phosphate as fatty acyl donor, but not acyl-CoA or acyl-ACP. This chain is Glycerol-3-phosphate acyltransferase, found in Rubrobacter xylanophilus (strain DSM 9941 / JCM 11954 / NBRC 16129 / PRD-1).